A 249-amino-acid chain; its full sequence is Probable transcriptional regulatory protein HY04AAS1_0501 (249 aa).

It belongs to the TACO1 family.

Its subcellular location is the cytoplasm. This chain is Probable transcriptional regulatory protein HY04AAS1_0501, found in Hydrogenobaculum sp. (strain Y04AAS1).